Reading from the N-terminus, the 873-residue chain is Protein sey1 (873 aa).

Over 1–762 the chain is Cytoplasmic; the sequence is MVDQRPRAGS…KRSAIGGITQ (762 aa). Residues 68–320 enclose the GB1/RHD3-type G domain; sequence GFNYHLISVF…IPADGFAHYA (253 aa). 78–85 lines the GTP pocket; it reads GSQSTGKS. A coiled-coil region spans residues 462–519; it reads SYDFAEIVKQETKAALERYEKEARASLVEGTSWSNYKQELKLYQKDLAEVSGQLRRDE. The tract at residues 691–716 is disordered; the sequence is RWVGHTPSSATAADEEDLTPIGGVDE. The span at 703 to 716 shows a compositional bias: acidic residues; sequence ADEEDLTPIGGVDE. The helical transmembrane segment at 763 to 783 threads the bilayer; that stretch reads VPLYFYGLLLALGWNEIWAVL. Over 784–786 the chain is Lumenal; sequence RNP. Residues 787-807 form a helical membrane-spanning segment; that stretch reads AYFFLLFVCAIGAYVTYQLNL. Topologically, residues 808–873 are cytoplasmic; that stretch reads WGPILKMADA…VEDEDENDDI (66 aa). A coiled-coil region spans residues 812–839; that stretch reads LKMADAASRQALEELKKKLREFLEASDT. The disordered stretch occupies residues 839-873; that stretch reads TGRQAMAMSSGEEYEMSSLNRGGKRVEDEDENDDI.

The protein belongs to the TRAFAC class dynamin-like GTPase superfamily. GB1/RHD3 GTPase family. RHD3 subfamily.

The protein localises to the endoplasmic reticulum membrane. Functionally, cooperates with the reticulon proteins and tubule-shaping DP1 family proteins to generate and maintain the structure of the tubular endoplasmic reticulum network. Has GTPase activity, which is required for its function in ER organization. This chain is Protein sey1 (sey1), found in Talaromyces marneffei (strain ATCC 18224 / CBS 334.59 / QM 7333) (Penicillium marneffei).